Reading from the N-terminus, the 495-residue chain is Probable cytosol aminopeptidase (495 aa).

Mn(2+) contacts are provided by K264 and D269. K276 is an active-site residue. Mn(2+) is bound by residues D287, D346, and E348. The active site involves R350.

This sequence belongs to the peptidase M17 family. It depends on Mn(2+) as a cofactor.

The protein resides in the cytoplasm. It catalyses the reaction Release of an N-terminal amino acid, Xaa-|-Yaa-, in which Xaa is preferably Leu, but may be other amino acids including Pro although not Arg or Lys, and Yaa may be Pro. Amino acid amides and methyl esters are also readily hydrolyzed, but rates on arylamides are exceedingly low.. It carries out the reaction Release of an N-terminal amino acid, preferentially leucine, but not glutamic or aspartic acids.. In terms of biological role, presumably involved in the processing and regular turnover of intracellular proteins. Catalyzes the removal of unsubstituted N-terminal amino acids from various peptides. This Geotalea uraniireducens (strain Rf4) (Geobacter uraniireducens) protein is Probable cytosol aminopeptidase.